A 48-amino-acid polypeptide reads, in one-letter code: Gas vesicle protein A (48 aa).

This sequence belongs to the gas vesicle GvpA family. As to quaternary structure, the gas vesicle shell is 2 nm thick and consists of a single layer of this protein. It forms helical ribs nearly perpendicular to the long axis of the vesicle.

The protein localises to the gas vesicle shell. In terms of biological role, gas vesicles are hollow, gas filled proteinaceous nanostructures found in some microorganisms. During planktonic growth they allow positioning of the organism at a favorable depth for light or nutrient acquisition. GvpA forms the protein shell. In Spirulina sp. (strain CCAP 1475/10), this protein is Gas vesicle protein A.